The sequence spans 88 residues: Small ribosomal subunit protein bS20 (88 aa).

Belongs to the bacterial ribosomal protein bS20 family.

Its function is as follows. Binds directly to 16S ribosomal RNA. This is Small ribosomal subunit protein bS20 from Clostridium botulinum (strain 657 / Type Ba4).